Reading from the N-terminus, the 251-residue chain is Triosephosphate isomerase (251 aa).

9-11 lines the substrate pocket; the sequence is NWK. H93 functions as the Electrophile in the catalytic mechanism. Residue E163 is the Proton acceptor of the active site. Substrate-binding positions include G169, S209, and 230 to 231; that span reads GG.

This sequence belongs to the triosephosphate isomerase family. Homodimer.

Its subcellular location is the cytoplasm. The enzyme catalyses D-glyceraldehyde 3-phosphate = dihydroxyacetone phosphate. It functions in the pathway carbohydrate biosynthesis; gluconeogenesis. Its pathway is carbohydrate degradation; glycolysis; D-glyceraldehyde 3-phosphate from glycerone phosphate: step 1/1. Involved in the gluconeogenesis. Catalyzes stereospecifically the conversion of dihydroxyacetone phosphate (DHAP) to D-glyceraldehyde-3-phosphate (G3P). The polypeptide is Triosephosphate isomerase (Ruegeria pomeroyi (strain ATCC 700808 / DSM 15171 / DSS-3) (Silicibacter pomeroyi)).